Consider the following 394-residue polypeptide: T-cell acute lymphocytic leukemia protein 1 (394 aa).

A compositionally biased stretch (basic and acidic residues) spans 1–17 (MSLKMMERLSTDMDGTR). The tract at residues 1–49 (MSLKMMERLSTDMDGTRDVASPPARQDAAEPERTVELSGVKEGAAPNSP) is disordered. 7 consecutive repeat copies span residues 83–89 (TELCRAT), 94–100 (TELCRAP), 105–111 (TELCRAP), 116–122 (TELCRAP), 127–133 (TELCRPP), 149–155 (SELCRAP), and 167–173 (TELCRPP). Residues 83 to 173 (TELCRATLTP…TATTELCRPP (91 aa)) are 7 X 7 AA approximate repeats of [TS]-E-L-C-R-[AP]-P. Positions 262 to 314 (VRRIFTNSRERWRQQNVNGAFAELRKLIPTHPPDKKLSKNEILRLAMKYINFL) constitute a bHLH domain. The disordered stretch occupies residues 347–394 (LSPNSSCGSSLDGAPSPDSYSEEHDALDSKHSRNLHQAMLPIDGSGQR). Positions 367-377 (SEEHDALDSKH) are enriched in basic and acidic residues.

First expressed in patches on the ventral side of the embryo in a region that will give rise to hematopoietic tissue. By late neurula stages, expressed throughout the ventral blood island region. By tailbud stages, expression extends to probable vascular progenitor cells, but is excluded from the presumptive liver anlage. Also expressed in the central nervous system at the tailbud stage.

Its subcellular location is the nucleus. Transcription factor that acts synergistically with lmo2 and gata1 to specify embryonic dorsal mesoderm to a hematopoietic fate. The protein is T-cell acute lymphocytic leukemia protein 1 of Xenopus laevis (African clawed frog).